Consider the following 112-residue polypeptide: Putative acyl carrier protein, mitochondrial (112 aa).

A mitochondrion-targeting transit peptide spans 1 to 28 (MLSRFSSQLRFISAVRPVIPKFQPLRFY). In terms of domain architecture, Carrier spans 33–109 (PDAEKRILKV…DAISYITKNP (77 aa)). Ser-69 carries the O-(pantetheine 4'-phosphoryl)serine modification.

It belongs to the acyl carrier protein (ACP) family. Post-translationally, 4'-phosphopantetheine is transferred from CoA to a specific serine of apo-ACP by acpS. This modification is essential for activity because fatty acids are bound in thioester linkage to the sulfhydryl of the prosthetic group.

Its subcellular location is the mitochondrion. It functions in the pathway lipid metabolism; fatty acid biosynthesis. In terms of biological role, carrier of the growing fatty acid chain in fatty acid biosynthesis. May be involved in the synthesis of very-long-chain fatty acids. This chain is Putative acyl carrier protein, mitochondrial, found in Schizosaccharomyces pombe (strain 972 / ATCC 24843) (Fission yeast).